We begin with the raw amino-acid sequence, 185 residues long: NOP protein chaperone 1 (185 aa).

Residues 1–40 (MEVHGKPKASPSCSSPTRDSSGVPVSKELLTAGSDGRGGI) are disordered. Positions 10–21 (SPSCSSPTRDSS) are enriched in low complexity. Residues S34 and S66 each carry the phosphoserine modification. The interval 118–185 (FEMNQSDSKE…LDSPASKKKK (68 aa)) is disordered. Acidic residues predominate over residues 143–152 (SESEDEDDSI). The residue at position 178 (S178) is a Phosphoserine.

Interacts with NOP58, RUVBL1 and RUVBL2; the interactions are direct and NOPCHAP1 bridges the association of NOP58 with RUVBL1:RUVBL2 even in absence of snoRNAs. The interactions with RUVBL1 and RUVBL2 are disrupted upon ATP binding.

It is found in the nucleus. Functionally, client-loading PAQosome/R2TP complex cofactor that selects NOP58 to promote box C/D small nucleolar ribonucleoprotein (snoRNP) assembly. Acts as a bridge between NOP58 and the R2TP complex via RUVBL1:RUVBL2. In Homo sapiens (Human), this protein is NOP protein chaperone 1.